A 50-amino-acid polypeptide reads, in one-letter code: Photosystem II reaction center protein M (50 aa).

Residues Gly-7–Ile-27 traverse the membrane as a helical segment.

The protein belongs to the PsbM family. PSII is composed of 1 copy each of membrane proteins PsbA, PsbB, PsbC, PsbD, PsbE, PsbF, PsbH, PsbI, PsbJ, PsbK, PsbL, PsbM, PsbT, PsbX, PsbY, Psb30/Ycf12, peripheral proteins PsbO, CyanoQ (PsbQ), PsbU, PsbV and a large number of cofactors. It forms dimeric complexes.

It is found in the cellular thylakoid membrane. One of the components of the core complex of photosystem II (PSII). PSII is a light-driven water:plastoquinone oxidoreductase that uses light energy to abstract electrons from H(2)O, generating O(2) and a proton gradient subsequently used for ATP formation. It consists of a core antenna complex that captures photons, and an electron transfer chain that converts photonic excitation into a charge separation. This subunit is found at the monomer-monomer interface. The protein is Photosystem II reaction center protein M of Prochlorococcus marinus (strain MIT 9515).